The chain runs to 898 residues: Neutral alpha-glucosidase C (898 aa).

The tract at residues 154–173 (QRATKGNGQNTPAATSQENQ) is disordered. Polar residues predominate over residues 157–171 (TKGNGQNTPAATSQE). The active-site Nucleophile is Asp495. The active site involves Glu498. Asp571 functions as the Proton donor in the catalytic mechanism.

It belongs to the glycosyl hydrolase 31 family.

The catalysed reaction is Hydrolysis of terminal, non-reducing (1-&gt;4)-linked alpha-D-glucose residues with release of alpha-D-glucose.. Has alpha-glucosidase activity. The polypeptide is Neutral alpha-glucosidase C (Ganc) (Mus musculus (Mouse)).